Reading from the N-terminus, the 554-residue chain is 2-succinyl-5-enolpyruvyl-6-hydroxy-3-cyclohexene-1-carboxylate synthase (554 aa).

It belongs to the TPP enzyme family. MenD subfamily. In terms of assembly, homodimer. It depends on Mg(2+) as a cofactor. Requires Mn(2+) as cofactor. Thiamine diphosphate is required as a cofactor.

The enzyme catalyses isochorismate + 2-oxoglutarate + H(+) = 5-enolpyruvoyl-6-hydroxy-2-succinyl-cyclohex-3-ene-1-carboxylate + CO2. It functions in the pathway quinol/quinone metabolism; 1,4-dihydroxy-2-naphthoate biosynthesis; 1,4-dihydroxy-2-naphthoate from chorismate: step 2/7. It participates in quinol/quinone metabolism; menaquinone biosynthesis. In terms of biological role, catalyzes the thiamine diphosphate-dependent decarboxylation of 2-oxoglutarate and the subsequent addition of the resulting succinic semialdehyde-thiamine pyrophosphate anion to isochorismate to yield 2-succinyl-5-enolpyruvyl-6-hydroxy-3-cyclohexene-1-carboxylate (SEPHCHC). This is 2-succinyl-5-enolpyruvyl-6-hydroxy-3-cyclohexene-1-carboxylate synthase from Flavobacterium johnsoniae (strain ATCC 17061 / DSM 2064 / JCM 8514 / BCRC 14874 / CCUG 350202 / NBRC 14942 / NCIMB 11054 / UW101) (Cytophaga johnsonae).